The following is a 606-amino-acid chain: Aspartate--tRNA(Asp/Asn) ligase (606 aa).

Glu-177 contributes to the L-aspartate binding site. Positions 201-204 are aspartate; sequence QLFK. Arg-223 contributes to the L-aspartate binding site. ATP-binding positions include 223 to 225 and Gln-232; that span reads RDE. His-461 contacts L-aspartate. An ATP-binding site is contributed by Glu-499. Arg-506 is a binding site for L-aspartate. 551–554 contacts ATP; the sequence is GLDR.

The protein belongs to the class-II aminoacyl-tRNA synthetase family. Type 1 subfamily. Homodimer.

Its subcellular location is the cytoplasm. The enzyme catalyses tRNA(Asx) + L-aspartate + ATP = L-aspartyl-tRNA(Asx) + AMP + diphosphate. Aspartyl-tRNA synthetase with relaxed tRNA specificity since it is able to aspartylate not only its cognate tRNA(Asp) but also tRNA(Asn). Reaction proceeds in two steps: L-aspartate is first activated by ATP to form Asp-AMP and then transferred to the acceptor end of tRNA(Asp/Asn). This is Aspartate--tRNA(Asp/Asn) ligase from Prochlorococcus marinus (strain NATL2A).